The chain runs to 589 residues: PTS system mannitol-specific EIICB component (589 aa).

Over 1 to 25 the chain is Cytoplasmic; the sequence is MEEKVSLKVRVQKLGTSLSNMVMPN. One can recognise a PTS EIIC type-2 domain in the interval 14 to 347; sequence LGTSLSNMVM…LHADKSTEDS (334 aa). Residues 26-47 form a helical membrane-spanning segment; the sequence is IGAFIAWGVLTALFIADGYLPN. The Extracellular portion of the chain corresponds to 48 to 51; sequence EQLA. The helical transmembrane segment at 52-72 threads the bilayer; it reads TVVGPMLTYLLPILIGYTGGY. Over 73–135 the chain is Cytoplasmic; the sequence is MIHGQRGAVV…PGFEMLVNNF (63 aa). Residues 136–157 traverse the membrane as a helical segment; sequence SAGLVGFALLLLAFYAIGPVVS. Residues 158-166 lie on the Extracellular side of the membrane; the sequence is TLTGAVGNG. A helical membrane pass occupies residues 167–187; that stretch reads VEAIVNARLLPMANIIIEPAK. Residues 188–274 are Cytoplasmic-facing; that stretch reads VLFLNNALNH…VMMKPTLFLA (87 aa). Residues 275-294 traverse the membrane as a helical segment; sequence AMAGGISGTFTFQLLDAGLK. Residues 295-316 are Extracellular-facing; that stretch reads SPASPGSIIAIMATAPKGVWPH. The chain crosses the membrane as a helical span at residues 317-338; that stretch reads LNILLGVLVAAVVSFLIAALIL. Residues 339 to 589 are Cytoplasmic-facing; sequence HADKSTEDSL…YDKMAARMYK (251 aa). The 96-residue stretch at 381–476 folds into the PTS EIIB type-2 domain; that stretch reads EKIIFACDAG…SLTGASPIAE (96 aa). The active-site Phosphocysteine intermediate; for EIIB activity is the Cys387. A Phosphocysteine; by EIIA modification is found at Cys387.

In terms of assembly, homodimer.

Its subcellular location is the cell membrane. The enzyme catalyses D-mannitol(out) + N(pros)-phospho-L-histidyl-[protein] = D-mannitol 1-phosphate(in) + L-histidyl-[protein]. In terms of biological role, the phosphoenolpyruvate-dependent sugar phosphotransferase system (sugar PTS), a major carbohydrate active transport system, catalyzes the phosphorylation of incoming sugar substrates concomitantly with their translocation across the cell membrane. The enzyme II CmtAB PTS system is involved in D-mannitol transport. In Streptococcus pneumoniae (strain ATCC BAA-255 / R6), this protein is PTS system mannitol-specific EIICB component (mtlA).